A 4022-amino-acid chain; its full sequence is Intermembrane lipid transfer protein VPS13B (4022 aa).

In terms of domain architecture, Chorein N-terminal spans 2 to 102 (LESYVTPILM…KDGIQDDHES (101 aa)). The disordered stretch occupies residues 100 to 134 (HESCGSNSTNRSTAESTKSSIKPRRMQQAAPTDPD). Residues 103-119 (CGSNSTNRSTAESTKSS) are compositionally biased toward polar residues. Serine 414, serine 999, serine 1002, and serine 1033 each carry phosphoserine. The interval 1247-1314 (NLSPTSPETM…SVTLEQTTSN (68 aa)) is disordered. Composition is skewed to polar residues over residues 1264-1292 (PVRS…TEGD) and 1302-1314 (FSDS…TTSN). Serine 1815 is modified (phosphoserine). The segment covering 1860–1872 (KSQEQKNNEKTDK) has biased composition (basic and acidic residues). The segment at 1860–1880 (KSQEQKNNEKTDKSSLNLPEV) is disordered. The SHR-BD domain occupies 2631–2716 (HFVICNDTQE…RTASLIIKVQ (86 aa)). The interval 3908–4022 (AFPVTEIDCA…KNKALRKGFP (115 aa)) is localizes the protein to the Golgi apparatus.

It belongs to the VPS13 family. In terms of assembly, interacts with STX6. Interacts with STX12. Interacts with RAB6A isoform 1 (GTP-bound) and isoform 2 (GTP-bound). Interacts with RAB6B (GTP-bound). In terms of tissue distribution, widely expressed. There is apparent differential expression of different transcripts. In fetal brain, lung, liver, and kidney, two transcripts of 2 and 5 kb are identified. These transcripts are also seen in all adult tissues analyzed. A larger transcript (12-14 kb) is expressed in prostate, testis, ovary, and colon in the adult. Expression is very low in adult brain tissue. Expressed in peripheral blood lymphocytes. Isoform 1 and isoform 2 are expressed in brain and retina. Isoform 2 is expressed ubiquitously.

The protein resides in the recycling endosome membrane. It is found in the cytoplasmic vesicle. Its subcellular location is the secretory vesicle. It localises to the acrosome membrane. The protein localises to the golgi apparatus. The protein resides in the cis-Golgi network membrane. It is found in the endoplasmic reticulum-Golgi intermediate compartment membrane. Its subcellular location is the trans-Golgi network membrane. It localises to the early endosome membrane. The protein localises to the lysosome membrane. Its function is as follows. Mediates the transfer of lipids between membranes at organelle contact sites. Binds phosphatidylinositol 3-phosphate. Functions as a tethering factor in the slow endocytic recycling pathway, to assist traffic between early and recycling endosomes. Involved in the transport of proacrosomal vesicles to the nuclear dense lamina (NDL) during spermatid development. Plays a role in the assembly of the Golgi apparatus, possibly by mediating trafficking to the Golgi membrane. Plays a role in the development of the nervous system, and may be required for neuron projection development. May also play a role during adipose tissue development. Required for maintenance of the ocular lens. The protein is Intermembrane lipid transfer protein VPS13B (VPS13B) of Homo sapiens (Human).